Consider the following 78-residue polypeptide: Large ribosomal subunit protein eL20 (78 aa).

The protein belongs to the eukaryotic ribosomal protein eL20 family. In terms of assembly, part of the 50S ribosomal subunit. Binds 23S rRNA.

The sequence is that of Large ribosomal subunit protein eL20 from Nanoarchaeum equitans (strain Kin4-M).